Reading from the N-terminus, the 507-residue chain is ATP synthase subunit alpha, plastid (507 aa).

Position 170 to 177 (170 to 177) interacts with ATP; the sequence is GDRQTGKT.

It belongs to the ATPase alpha/beta chains family. As to quaternary structure, F-type ATPases have 2 components, CF(1) - the catalytic core - and CF(0) - the membrane proton channel. CF(1) has five subunits: alpha(3), beta(3), gamma(1), delta(1), epsilon(1). CF(0) has four main subunits: a, b, b' and c.

The protein resides in the plastid membrane. It catalyses the reaction ATP + H2O + 4 H(+)(in) = ADP + phosphate + 5 H(+)(out). Functionally, produces ATP from ADP in the presence of a proton gradient across the membrane. The alpha chain is a regulatory subunit. This is ATP synthase subunit alpha, plastid from Cuscuta gronovii (Common dodder).